The following is a 217-amino-acid chain: Ras-related protein RABA2c (217 aa).

GTP contacts are provided by residues G19 to N27, C38 to T44, D67 to Q71, N125 to D128, and S155 to L157. The Effector region signature appears at S41–F49. The disordered stretch occupies residues P195–S217. Residues C214 and C215 are each lipidated (S-geranylgeranyl cysteine).

It belongs to the small GTPase superfamily. Rab family. Expressed in root tips.

The protein resides in the endosome membrane. It localises to the golgi apparatus. It is found in the trans-Golgi network membrane. Its function is as follows. Intracellular vesicle trafficking and protein transport. This chain is Ras-related protein RABA2c (RABA2C), found in Arabidopsis thaliana (Mouse-ear cress).